A 114-amino-acid polypeptide reads, in one-letter code: Aspartate 1-decarboxylase (114 aa).

The active-site Schiff-base intermediate with substrate; via pyruvic acid is the Ser25. Pyruvic acid (Ser) is present on Ser25. Position 57 (Thr57) interacts with substrate. Tyr58 serves as the catalytic Proton donor. 73–75 (GAA) contributes to the substrate binding site.

It belongs to the PanD family. Heterooctamer of four alpha and four beta subunits. The cofactor is pyruvate. In terms of processing, is synthesized initially as an inactive proenzyme, which is activated by self-cleavage at a specific serine bond to produce a beta-subunit with a hydroxyl group at its C-terminus and an alpha-subunit with a pyruvoyl group at its N-terminus.

The protein localises to the cytoplasm. The catalysed reaction is L-aspartate + H(+) = beta-alanine + CO2. It functions in the pathway cofactor biosynthesis; (R)-pantothenate biosynthesis; beta-alanine from L-aspartate: step 1/1. Its function is as follows. Catalyzes the pyruvoyl-dependent decarboxylation of aspartate to produce beta-alanine. This is Aspartate 1-decarboxylase from Thermotoga petrophila (strain ATCC BAA-488 / DSM 13995 / JCM 10881 / RKU-1).